A 413-amino-acid chain; its full sequence is MEYPNLLPRFLKYVKVNSRSDENSDRFPSTEREENFQKNVIMKDLEELGLSDIHYNQKAGSVIAEIPSNVDYDVPVMGFLAHSDTADFNSENVKPQIHKNYDGESKIQLGDSEFYLDPEVYPNLRKYKGQTIITASGDTLLGADDKCGISELMTFAEYLMNHPEVKHGKIRLAFTPDEEIGTGAEQFDVKDFGADFAFTVDGEAPGKLGDCTFSAAQFTLDIQGVNVHPAVAKGQMINAVQVGIDFHNQLPEHDRPEHTDGREGFFHLLSFDGTVDHAHLAYIIRDFERDGLEERKNLVKSIVKKMNDEFGTERIKLQMNDQYYNMADELKKHMDIVDLARDAYKAEGLEVNEDPVRGGTDGSQLTYMGLPCPNIFAGEENMHGRYEYTVLESMYKTVDVMIKMAELNAERAK.

His82 lines the Zn(2+) pocket. The active site involves Asp84. Residue Asp144 participates in Zn(2+) binding. The active-site Proton acceptor is the Glu178. 3 residues coordinate Zn(2+): Glu179, Asp201, and His383.

It belongs to the peptidase M20B family. Homotrimer. Requires Zn(2+) as cofactor.

The protein localises to the cytoplasm. The enzyme catalyses Release of the N-terminal residue from a tripeptide.. Totally inhibited by EDTA, EGTA, and 1,10-phenanthroline. Strongly inhibited by divalent cations such as Cu(2+), Cd(2+), Co(2+) and Mn(2+). Partially inhibited by the reducing agents 2-mercaptoethanol and dithiothreitol. Its function is as follows. Cleaves the N-terminal amino acid of tripeptides. Shows broad substrate specificity, exhibiting maximum activity against hydrophobic tripeptides, with the highest activity for Met-Gly-Gly. Therefore this enzyme may play an important role in flavor formation during cheese ripening. Is also able to slowly hydrolyze some hydrophobic dipeptides, but displays no activity against tetrapeptides and the tripeptide Phe-Gly-Gly. In Lactobacillus helveticus (Lactobacillus suntoryeus), this protein is Peptidase T (pepT).